Reading from the N-terminus, the 475-residue chain is Ribulose bisphosphate carboxylase large chain (475 aa).

The propeptide occupies 1-2 (MS). Position 3 is an N-acetylproline (Pro-3). Lys-14 is modified (N6,N6,N6-trimethyllysine). Residues Asn-123 and Thr-173 each coordinate substrate. The active-site Proton acceptor is the Lys-175. Lys-177 is a substrate binding site. Mg(2+)-binding residues include Lys-201, Asp-203, and Glu-204. Position 201 is an N6-carboxylysine (Lys-201). The active-site Proton acceptor is the His-294. Positions 295, 327, and 379 each coordinate substrate.

This sequence belongs to the RuBisCO large chain family. Type I subfamily. Heterohexadecamer of 8 large chains and 8 small chains. Mg(2+) serves as cofactor.

It localises to the plastid. The enzyme catalyses 2 (2R)-3-phosphoglycerate + 2 H(+) = D-ribulose 1,5-bisphosphate + CO2 + H2O. The catalysed reaction is D-ribulose 1,5-bisphosphate + O2 = 2-phosphoglycolate + (2R)-3-phosphoglycerate + 2 H(+). In terms of biological role, ruBisCO catalyzes two reactions: the carboxylation of D-ribulose 1,5-bisphosphate, the primary event in carbon dioxide fixation, as well as the oxidative fragmentation of the pentose substrate in the photorespiration process. Both reactions occur simultaneously and in competition at the same active site. In Aneura mirabilis (Parasitic liverwort), this protein is Ribulose bisphosphate carboxylase large chain.